The chain runs to 466 residues: Asparagine--tRNA ligase (466 aa).

This sequence belongs to the class-II aminoacyl-tRNA synthetase family. Homodimer.

The protein resides in the cytoplasm. It catalyses the reaction tRNA(Asn) + L-asparagine + ATP = L-asparaginyl-tRNA(Asn) + AMP + diphosphate + H(+). The protein is Asparagine--tRNA ligase of Yersinia pseudotuberculosis serotype O:1b (strain IP 31758).